A 153-amino-acid polypeptide reads, in one-letter code: Transcription antitermination protein NusB (153 aa).

The protein belongs to the NusB family.

Involved in transcription antitermination. Required for transcription of ribosomal RNA (rRNA) genes. Binds specifically to the boxA antiterminator sequence of the ribosomal RNA (rrn) operons. The polypeptide is Transcription antitermination protein NusB (Beutenbergia cavernae (strain ATCC BAA-8 / DSM 12333 / CCUG 43141 / JCM 11478 / NBRC 16432 / NCIMB 13614 / HKI 0122)).